We begin with the raw amino-acid sequence, 721 residues long: Protein mu-NS (721 aa).

An interaction with sigma-NS region spans residues 1-13 (MASFKGFSANTVP). Positions 1–38 (MASFKGFSANTVPVSKAKRDISSLAATPGLRSQSFTPS) are RNA-binding. Residues 14 to 40 (VSKAKRDISSLAATPGLRSQSFTPSVD) form an interaction with mu-2 region. The tract at residues 471 to 721 (SNDVTDGIKL…IDFSVPTDEL (251 aa)) is involved in the formation of factory-like inclusions. Coiled-coil stretches lie at residues 522 to 559 (PLLSQLRELSSEVTRLQMELSRAQSLNAQLEADVKSAQ) and 628 to 684 (LMNG…ALNQ).

This sequence belongs to the orthoreovirus mu-NS protein family. Interacts with mu-2. Interacts with sigma-NS; in viral factories. Interacts with the inner capsid proteins lambda-1 and sigma-2, and outer capsid protein lambda-2; in viral factories. Post-translationally, the N-terminus is blocked.

The protein resides in the host cytoplasm. Non-structural protein implicated with protein sigma-NS in forming the matrix of viral factories, which are large inclusions in the host cytoplasm where replication intermediates are assembled and viral RNA replication takes place. Together with mu-2, recruits the other core proteins to these factories. Binds RNA and recruits viral mRNAs to sites of viral replication. The polypeptide is Protein mu-NS (M3) (Reovirus type 3 (strain Dearing) (T3D)).